A 489-amino-acid polypeptide reads, in one-letter code: ATP synthase subunit beta, chloroplastic (489 aa).

An ATP-binding site is contributed by 170–177; the sequence is GGAGVGKT.

It belongs to the ATPase alpha/beta chains family. F-type ATPases have 2 components, CF(1) - the catalytic core - and CF(0) - the membrane proton channel. CF(1) has five subunits: alpha(3), beta(3), gamma(1), delta(1), epsilon(1). CF(0) has four main subunits: a(1), b(1), b'(1) and c(9-12).

The protein localises to the plastid. It localises to the chloroplast thylakoid membrane. The enzyme catalyses ATP + H2O + 4 H(+)(in) = ADP + phosphate + 5 H(+)(out). Its function is as follows. Produces ATP from ADP in the presence of a proton gradient across the membrane. The catalytic sites are hosted primarily by the beta subunits. This is ATP synthase subunit beta, chloroplastic from Zygnema circumcarinatum (Green alga).